We begin with the raw amino-acid sequence, 322 residues long: tRNA dimethylallyltransferase (322 aa).

19-26 (GPTASGKT) contributes to the ATP binding site. 21–26 (TASGKT) lines the substrate pocket. 3 interaction with substrate tRNA regions span residues 44-47 (DSAL), 168-172 (QRIQR), and 255-260 (RCVGYR).

The protein belongs to the IPP transferase family. Monomer. Mg(2+) serves as cofactor.

The catalysed reaction is adenosine(37) in tRNA + dimethylallyl diphosphate = N(6)-dimethylallyladenosine(37) in tRNA + diphosphate. Functionally, catalyzes the transfer of a dimethylallyl group onto the adenine at position 37 in tRNAs that read codons beginning with uridine, leading to the formation of N6-(dimethylallyl)adenosine (i(6)A). In Cupriavidus necator (strain ATCC 17699 / DSM 428 / KCTC 22496 / NCIMB 10442 / H16 / Stanier 337) (Ralstonia eutropha), this protein is tRNA dimethylallyltransferase.